The sequence spans 424 residues: GTPase Obg (424 aa).

The region spanning 1–160 (MFDRVEINIK…YDLILELKLI (160 aa)) is the Obg domain. The region spanning 161–328 (ADVAIIGYPN…LLAKVAEKLD (168 aa)) is the OBG-type G domain. GTP-binding positions include 167-174 (GYPNVGKS), 192-196 (FTTLS), 213-216 (EVPG), 280-283 (NKID), and 309-311 (SAL). Residues Ser-174 and Thr-194 each contribute to the Mg(2+) site. An OCT domain is found at 349–424 (PAPKGKMGFR…IITGRMEWYL (76 aa)).

It belongs to the TRAFAC class OBG-HflX-like GTPase superfamily. OBG GTPase family. Monomer. Mg(2+) is required as a cofactor.

It localises to the cytoplasm. In terms of biological role, an essential GTPase which binds GTP, GDP and possibly (p)ppGpp with moderate affinity, with high nucleotide exchange rates and a fairly low GTP hydrolysis rate. Plays a role in control of the cell cycle, stress response, ribosome biogenesis and in those bacteria that undergo differentiation, in morphogenesis control. The protein is GTPase Obg of Dehalococcoides mccartyi (strain ATCC BAA-2100 / JCM 16839 / KCTC 5957 / BAV1).